A 132-amino-acid polypeptide reads, in one-letter code: ATP synthase epsilon chain, chloroplastic (132 aa).

Belongs to the ATPase epsilon chain family. In terms of assembly, F-type ATPases have 2 components, CF(1) - the catalytic core - and CF(0) - the membrane proton channel. CF(1) has five subunits: alpha(3), beta(3), gamma(1), delta(1), epsilon(1). CF(0) has three main subunits: a, b and c.

Its subcellular location is the plastid. It localises to the chloroplast thylakoid membrane. In terms of biological role, produces ATP from ADP in the presence of a proton gradient across the membrane. The polypeptide is ATP synthase epsilon chain, chloroplastic (Pylaiella littoralis (Seaweed)).